An 845-amino-acid chain; its full sequence is Translation initiation factor IF-2 (845 aa).

Basic and acidic residues-rich tracts occupy residues 139–198 and 206–228; these read EAKR…EKPA and FRSE…KELH. The interval 139-253 is disordered; sequence EAKRQAAEEE…PQKAAPAAKH (115 aa). Positions 345-512 constitute a tr-type G domain; that stretch reads SRAAVVTIMG…AILLQAEVME (168 aa). The interval 354 to 361 is G1; that stretch reads GHVDHGKT. 354–361 contributes to the GTP binding site; that stretch reads GHVDHGKT. The G2 stretch occupies residues 379–383; it reads GITQH. The G3 stretch occupies residues 400-403; it reads DTPG. GTP contacts are provided by residues 400 to 404 and 454 to 457; these read DTPGH and NKID. The tract at residues 454–457 is G4; sequence NKID. Residues 490–492 form a G5 region; the sequence is SAK.

It belongs to the TRAFAC class translation factor GTPase superfamily. Classic translation factor GTPase family. IF-2 subfamily.

Its subcellular location is the cytoplasm. One of the essential components for the initiation of protein synthesis. Protects formylmethionyl-tRNA from spontaneous hydrolysis and promotes its binding to the 30S ribosomal subunits. Also involved in the hydrolysis of GTP during the formation of the 70S ribosomal complex. The protein is Translation initiation factor IF-2 of Nitrosococcus oceani (strain ATCC 19707 / BCRC 17464 / JCM 30415 / NCIMB 11848 / C-107).